The chain runs to 3797 residues: A-kinase anchor protein 9 (3797 aa).

The tract at residues 1–140 is disordered; sequence MEDEERQRKL…SSEQGAQSSQ (140 aa). Composition is skewed to polar residues over residues 50-65 and 92-108; these read HTDQ…SSQR and EIST…NGCN. Positions 115-124 are enriched in basic and acidic residues; that stretch reads KPTDPLREEE. Position 139 is a phosphoserine (Ser-139). 2 coiled-coil regions span residues 140 to 607 and 640 to 976; these read QTCL…LRTQ and IHYK…LLAN. A Phosphoserine modification is found at Ser-1288. 3 disordered regions span residues 1643-1668, 2323-2343, and 2419-2454; these read STQT…LERS, VVST…EESF, and SDNL…ASRT. Basic and acidic residues-rich tracts occupy residues 1648–1668 and 2328–2343; these read DGHD…LERS and QQRE…EESF. Positions 1808–2377 form a coiled coil; that stretch reads SRLQAAVEKL…MTHMNNVLKE (570 aa). A compositionally biased stretch (polar residues) spans 2438-2454; it reads KQTSLTRLQESPEASRT. The PKA-RII subunit binding domain stretch occupies residues 2498 to 2510; sequence DLQRSLEKFAAAL. Disordered stretches follow at residues 2604–2695 and 3271–3296; these read LEEA…SSSG and MEKD…QKKM. Acidic residues predominate over residues 2606 to 2615; the sequence is EAEERPEEGG. Over residues 2642–2669 the composition is skewed to basic and acidic residues; the sequence is PLTEAKEKLSYSLEKEKRTGEQESREAP. Residues 2975 to 3325 are a coiled coil; the sequence is LQKADRRSLL…QVYKLDLEGK (351 aa). The span at 3279–3294 shows a compositional bias: polar residues; it reads QKTLQTEQEANTQGQK. Phosphoserine occurs at positions 3732, 3755, and 3787.

In terms of assembly, interacts with the regulatory region of protein kinase N (PKN), protein phosphatase 2A (PP2A), protein phosphatase 1 (PP1) and the immature non-phosphorylated form of PKC epsilon. Interacts with CIP4 and FNBP1. Interacts with chloride intracellular channel proteins CLIC1, CLIC4 and CLIC5. CSNK1D binding promotes its centrosomal subcellular location. Interacts with GM130/GOLGA2; leading to recruitment to the Golgi apparatus. Interacts with KCNQ1; targets protein kinase A (PKA) catalytic and regulatory subunits and protein phosphatase 1 (PP1), to the heterodimer KCNQ1-KCNE1. Interacts with PDE4DIP isoform 2; this interaction stabilizes both proteins. In complex with PDE4DIP isoform 2, recruits CAMSAP2 to the Golgi apparatus. Forms a pericentrosomal complex with CDK5RAP2, EB1/MAPRE1 and PDE4DIP isoform 2; within this complex, MAPRE1 binding to CDK5RAP2 may be mediated by PDE4DIP. Interacts with MAPRE1 and MAPRE3. Interacts (via C-terminus) with CAMSAP2; this interaction is much stronger in the presence of PDE4DIP isoform 2. Interacts with CAMSAP3. Interacts (via C-terminus) with the gamma-tubulin ring complex (gamma-TuRC), composed of gamma-tubulin, TUBGCP2, TUBGCP3, TUBGCP4, TUBGCP5 and TUBGCP6.

The protein localises to the golgi apparatus. The protein resides in the cytoplasm. It is found in the cytoskeleton. It localises to the microtubule organizing center. Its subcellular location is the centrosome. Its function is as follows. Scaffolding protein that assembles several protein kinases and phosphatases on the centrosome and Golgi apparatus. Required to maintain the integrity of the Golgi apparatus. Required for microtubule nucleation at the cis-side of the Golgi apparatus. Required for association of the centrosomes with the poles of the bipolar mitotic spindle during metaphase. In complex with PDE4DIP isoform 2/MMG8/SMYLE, recruits CAMSAP2 to the Golgi apparatus and tethers non-centrosomal minus-end microtubules to the Golgi, an important step for polarized cell movement. In complex with PDE4DIP isoform 2, EB1/MAPRE1 and CDK5RAP2, contributes to microtubules nucleation and extension also from the centrosome to the cell periphery. In Mus musculus (Mouse), this protein is A-kinase anchor protein 9 (Akap9).